Reading from the N-terminus, the 118-residue chain is Co-chaperonin GroES (118 aa).

Belongs to the GroES chaperonin family. In terms of assembly, heptamer of 7 subunits arranged in a ring. Interacts with the chaperonin GroEL.

Its subcellular location is the cytoplasm. Together with the chaperonin GroEL, plays an essential role in assisting protein folding. The GroEL-GroES system forms a nano-cage that allows encapsulation of the non-native substrate proteins and provides a physical environment optimized to promote and accelerate protein folding. GroES binds to the apical surface of the GroEL ring, thereby capping the opening of the GroEL channel. This Helicobacter acinonychis (strain Sheeba) protein is Co-chaperonin GroES.